A 59-amino-acid chain; its full sequence is Conotoxin ViVB (59 aa).

An N-terminal signal peptide occupies residues 1–22 (MRCVPVFIILLLLIPSAPSAAV). Residues 23–46 (QPKTEKDDVPLASFHDSAMRILSR) constitute a propeptide that is removed on maturation. Glutamine 47 is subject to Pyrrolidone carboxylic acid. Valine 58 bears the Valine amide mark.

Contains 2 disulfide bonds that can be either 'C1-C3, C2-C4' or 'C1-C4, C2-C3', since these disulfide connectivities have been observed for conotoxins with cysteine framework V (for examples, see AC P0DQQ7 and AC P81755). As to expression, expressed by the venom duct.

The protein localises to the secreted. The polypeptide is Conotoxin ViVB (Conus virgo (Virgin cone)).